Here is a 161-residue protein sequence, read N- to C-terminus: Zinc metalloproteinase/disintegrin (161 aa).

The region spanning 1 to 72 (ERDLLVAVTM…ENPQCILNKH (72 aa)) is the Peptidase M12B domain. His-12 is a binding site for Zn(2+). Residue Glu-13 is part of the active site. The Zn(2+) site is built by His-16 and His-22. 2 disulfides stabilise this stretch: Cys-27–Cys-51 and Cys-29–Cys-34. The propeptide occupies 73–88 (LRTDTVSTPVSGNELL). One can recognise a Disintegrin domain in the interval 89 to 161 (EAGEECDCGT…ADCPRNRFHA (73 aa)). Disulfide bonds link Cys-94/Cys-109, Cys-96/Cys-104, Cys-103/Cys-126, Cys-117/Cys-123, Cys-122/Cys-147, and Cys-135/Cys-154. The Cell attachment site signature appears at 139-141 (RGD).

Belongs to the venom metalloproteinase (M12B) family. P-II subfamily. P-IIa sub-subfamily. In terms of assembly, monomer. As to expression, expressed by the venom gland.

It is found in the secreted. Functionally, impairs hemostasis in the envenomed animal. Disintegrin: inhibit platelet aggregation induced by ADP, thrombin, platelet-activating factor and collagen. Acts by inhibiting fibrinogen interaction with platelet receptors GPIIb/GPIIIa (ITGA2B/ITGB3). In Bothrops jararaca (Jararaca), this protein is Zinc metalloproteinase/disintegrin.